We begin with the raw amino-acid sequence, 372 residues long: Glutamate 5-kinase (372 aa).

K14 is a binding site for ATP. Residues S54, D141, and N153 each coordinate substrate. ATP is bound at residue 173–174 (TD). Residues 280 to 358 (RGTLVLDDGA…DAIEALLGYV (79 aa)) form the PUA domain.

Belongs to the glutamate 5-kinase family.

It is found in the cytoplasm. It carries out the reaction L-glutamate + ATP = L-glutamyl 5-phosphate + ADP. The protein operates within amino-acid biosynthesis; L-proline biosynthesis; L-glutamate 5-semialdehyde from L-glutamate: step 1/2. Functionally, catalyzes the transfer of a phosphate group to glutamate to form L-glutamate 5-phosphate. The chain is Glutamate 5-kinase from Pseudomonas paraeruginosa (strain DSM 24068 / PA7) (Pseudomonas aeruginosa (strain PA7)).